Here is a 467-residue protein sequence, read N- to C-terminus: ATP synthase subunit beta (467 aa).

Position 150–157 (150–157 (GGAGVGKT)) interacts with ATP.

This sequence belongs to the ATPase alpha/beta chains family. F-type ATPases have 2 components, CF(1) - the catalytic core - and CF(0) - the membrane proton channel. CF(1) has five subunits: alpha(3), beta(3), gamma(1), delta(1), epsilon(1). CF(0) has three main subunits: a(1), b(2) and c(9-12). The alpha and beta chains form an alternating ring which encloses part of the gamma chain. CF(1) is attached to CF(0) by a central stalk formed by the gamma and epsilon chains, while a peripheral stalk is formed by the delta and b chains.

It is found in the cell inner membrane. It carries out the reaction ATP + H2O + 4 H(+)(in) = ADP + phosphate + 5 H(+)(out). Functionally, produces ATP from ADP in the presence of a proton gradient across the membrane. The catalytic sites are hosted primarily by the beta subunits. The chain is ATP synthase subunit beta from Vibrio cholerae serotype O1 (strain ATCC 39541 / Classical Ogawa 395 / O395).